Consider the following 474-residue polypeptide: ATP synthase subunit beta (474 aa).

153 to 160 (GGAGVGKT) lines the ATP pocket.

Belongs to the ATPase alpha/beta chains family. F-type ATPases have 2 components, CF(1) - the catalytic core - and CF(0) - the membrane proton channel. CF(1) has five subunits: alpha(3), beta(3), gamma(1), delta(1), epsilon(1). CF(0) has three main subunits: a(1), b(2) and c(9-12). The alpha and beta chains form an alternating ring which encloses part of the gamma chain. CF(1) is attached to CF(0) by a central stalk formed by the gamma and epsilon chains, while a peripheral stalk is formed by the delta and b chains.

It localises to the cell inner membrane. The catalysed reaction is ATP + H2O + 4 H(+)(in) = ADP + phosphate + 5 H(+)(out). Produces ATP from ADP in the presence of a proton gradient across the membrane. The catalytic sites are hosted primarily by the beta subunits. In Neorickettsia sennetsu (strain ATCC VR-367 / Miyayama) (Ehrlichia sennetsu), this protein is ATP synthase subunit beta.